Reading from the N-terminus, the 375-residue chain is Trans-enoyl reductase BOA5 (375 aa).

The span at Met-1–Glu-16 shows a compositional bias: polar residues. Residues Met-1–Pro-21 form a disordered region. Position 42 to 45 (Ser-42 to Lys-45) interacts with NADP(+). A substrate-binding site is contributed by Val-121–Leu-128. The segment at Gly-147–Thr-168 is disordered. NADP(+) is bound by residues Ser-185 to Thr-188, Ser-208 to Asn-211, Tyr-226, and Leu-273 to Asp-274. Ala-294–Phe-298 lines the substrate pocket. Val-363–Ser-364 contacts NADP(+).

This sequence belongs to the zinc-containing alcohol dehydrogenase family. In terms of assembly, monomer.

Its pathway is polyketide biosynthesis. Trans-enoyl reductase; part of the gene cluster A that mediates the biosynthesis of botcinic acid and its botcinin derivatives, acetate-derived polyketides that contribute to virulence when combined with the sesquiterpene botrydial. Botcinic acid and its derivatives have been shown to induce chlorosis and necrosis during host plant infection, but also have antifungal activities. Two polyketide synthases, BOA6 and BOA9, are involved in the biosynthesis of botcinins. BOA6 mediates the formation of the per-methylated tetraketide core by condensation of four units of malonyl-CoA with one unit of acetyl-CoA, which would be methylated in activated methylene groups to yield a bicyclic acid intermediate that could then either be converted to botrylactone derivatives or lose the starter acetate unit through a retro-Claisen type C-C bond cleavage to yield botcinin derivatives. The second polyketide synthase, BOA9, is probably required for the biosynthesis of the tetraketide side chain of botcinins. The methyltransferase (MT) domain within BOA6 is probably responsible for the incorporation of four methyl groups. The trans-enoyl reductase BOA5 might take over the enoyl reductase function of BOA6 that misses an ER domain. The monooxygenases BOA2, BOA3 and BOA4 might be involved in further hydroxylations at C4, C5 and C8, whereas BOA7, close to BOA9, could potentially be involved in the hydroxylation at C4 in the side chain of botcinins. This chain is Trans-enoyl reductase BOA5, found in Botryotinia fuckeliana (strain B05.10) (Noble rot fungus).